Consider the following 399-residue polypeptide: C-type lectin domain family 4 member M (399 aa).

The Cytoplasmic portion of the chain corresponds to 1-49 (MSDSKEQRVQPLGLLEEDPTTSGIRLFPRDFQFQQTHGHKSSTGCLGHG). Positions 14–15 (LL) match the Endocytosis signal motif. Residues 50-70 (PLVLQLLSFTLLAGFLVAILV) traverse the membrane as a helical; Signal-anchor for type II membrane protein segment. Topologically, residues 71-399 (QVYKGPSSLS…KKPTACFRDE (329 aa)) are extracellular. N-linked (GlcNAc...) asparagine glycosylation is present at Asn-92. 7 consecutive repeat copies span residues 108-130 (KLQE…PEKS), 131-153 (RLQE…PENS), 154-176 (RLQE…PEKS), 177-199 (KQQE…PEKS), 200-222 (KQQE…PEKS), 223-245 (KQQE…PDQS), and 246-268 (KQQQ…CCRC). The interval 108-269 (KLQEIYQELT…AFERLCCRCP (162 aa)) is 7 X approximate tandem repeats. Intrachain disulfides connect Cys-265–Cys-395, Cys-268–Cys-279, Cys-296–Cys-389, and Cys-368–Cys-381. The region spanning 274–390 (FFQGNCYFIS…CNVDNYWICK (117 aa)) is the C-type lectin domain. The Ca(2+) site is built by Glu-359, Asn-361, Ser-363, Glu-366, Asn-377, and Asp-378. Asn-361 is a glycosylation site (N-linked (GlcNAc...) asparagine).

As to quaternary structure, homotetramer.

The protein localises to the membrane. Probable pathogen-recognition receptor involved in peripheral immune surveillance in liver. May mediate the endocytosis of pathogens which are subsequently degraded in lysosomal compartments. Probably recognizes in a calcium-dependent manner high mannose N-linked oligosaccharides in a variety of pathogen antigens. Is a receptor for ICAM3, probably by binding to mannose-like carbohydrates. In Nomascus concolor (Black crested gibbon), this protein is C-type lectin domain family 4 member M (CLEC4M).